A 731-amino-acid chain; its full sequence is 1,4-alpha-glucan branching enzyme GlgB (731 aa).

Asp-412 serves as the catalytic Nucleophile. Glu-465 functions as the Proton donor in the catalytic mechanism.

Belongs to the glycosyl hydrolase 13 family. GlgB subfamily. In terms of assembly, monomer.

The enzyme catalyses Transfers a segment of a (1-&gt;4)-alpha-D-glucan chain to a primary hydroxy group in a similar glucan chain.. It participates in glycan biosynthesis; glycogen biosynthesis. Catalyzes the formation of the alpha-1,6-glucosidic linkages in glycogen by scission of a 1,4-alpha-linked oligosaccharide from growing alpha-1,4-glucan chains and the subsequent attachment of the oligosaccharide to the alpha-1,6 position. In Bordetella parapertussis (strain 12822 / ATCC BAA-587 / NCTC 13253), this protein is 1,4-alpha-glucan branching enzyme GlgB.